The primary structure comprises 402 residues: NADH-quinone oxidoreductase subunit D (402 aa).

Belongs to the complex I 49 kDa subunit family. NDH-1 is composed of 14 different subunits. Subunits NuoB, C, D, E, F, and G constitute the peripheral sector of the complex.

It is found in the cell inner membrane. The catalysed reaction is a quinone + NADH + 5 H(+)(in) = a quinol + NAD(+) + 4 H(+)(out). Its function is as follows. NDH-1 shuttles electrons from NADH, via FMN and iron-sulfur (Fe-S) centers, to quinones in the respiratory chain. The immediate electron acceptor for the enzyme in this species is believed to be ubiquinone. Couples the redox reaction to proton translocation (for every two electrons transferred, four hydrogen ions are translocated across the cytoplasmic membrane), and thus conserves the redox energy in a proton gradient. The polypeptide is NADH-quinone oxidoreductase subunit D (Nitrobacter winogradskyi (strain ATCC 25391 / DSM 10237 / CIP 104748 / NCIMB 11846 / Nb-255)).